Reading from the N-terminus, the 171-residue chain is MGQILLILLLQLIYVPVLTLRTIMLVKGRTIIAGVLGTVETLIYIFALGIVFRDLTTVGMIVYALGFGLGILIGGFVERKLAIGYNMIQVHTQDFPAELIQVIRDNGFGVTHYQGQGRDGIRYRLDVLAARTRMKVLRNLVEEYEPKAFLVAFDSVDFKGGYMLKGLKRSQ.

3 helical membrane passes run 4–24, 31–51, and 57–77; these read ILLI…RTIM, IIAG…LGIV, and TVGM…GGFV.

Belongs to the UPF0316 family.

The protein localises to the cell membrane. The polypeptide is UPF0316 protein Exig_2248 (Exiguobacterium sibiricum (strain DSM 17290 / CCUG 55495 / CIP 109462 / JCM 13490 / 255-15)).